The chain runs to 338 residues: MRLYELSFAQIEDFFYKLAEVKDIIKDSGLMEFLPELKKLDSTIQTGTTRVKHAFPIFQKGGVVMDITNVQQAQIAEEAGAVAVMVLDKLPYDVRKSGGVARMADPKIIGEVMNSITIPVMAKVRIGHYYEAKLLEALGVDMIDESEVLTPADEEHHINKWEFSVPFVNGARNLGEALRRTVEGASMIRTKGEAGTGNVSEAVKHMKIINSEIRSLISMSEEDRVKKAREYQVPYQLVELTAKIKRLPIVNFAAGGIATPADAALMMWLGADGLFVGSGIFKSQDPDERAKAVVLAAACWEYPEIVLEAQKMISEQKSMMGIDIKSLKPEELLQVRGL.

Asp66 contributes to the D-ribose 5-phosphate binding site. Residue Lys123 is the Schiff-base intermediate with D-ribose 5-phosphate of the active site. A D-ribose 5-phosphate-binding site is contributed by Gly195. Lys207 is a binding site for D-glyceraldehyde 3-phosphate. D-ribose 5-phosphate is bound by residues Gly256 and Gly277 to Ser278.

The protein belongs to the PdxS/SNZ family. As to quaternary structure, in the presence of PdxT, forms a dodecamer of heterodimers.

The catalysed reaction is aldehydo-D-ribose 5-phosphate + D-glyceraldehyde 3-phosphate + L-glutamine = pyridoxal 5'-phosphate + L-glutamate + phosphate + 3 H2O + H(+). The protein operates within cofactor biosynthesis; pyridoxal 5'-phosphate biosynthesis. Functionally, catalyzes the formation of pyridoxal 5'-phosphate from ribose 5-phosphate (RBP), glyceraldehyde 3-phosphate (G3P) and ammonia. The ammonia is provided by the PdxT subunit. Can also use ribulose 5-phosphate and dihydroxyacetone phosphate as substrates, resulting from enzyme-catalyzed isomerization of RBP and G3P, respectively. The protein is Pyridoxal 5'-phosphate synthase subunit PdxS of Saccharolobus islandicus (strain Y.N.15.51 / Yellowstone #2) (Sulfolobus islandicus).